The following is a 447-amino-acid chain: GTPase Der (447 aa).

2 EngA-type G domains span residues 4–165 (QIIT…PEEE) and 180–357 (LQIV…KIWN). GTP is bound by residues 10–17 (GRPNVGKS), 57–61 (DTPGL), 119–122 (NKCE), 186–193 (GRPNAGKS), 233–237 (DTAGL), and 298–301 (NKWD). The region spanning 358-443 (KKITTSKLNE…PIRFIYVKTK (86 aa)) is the KH-like domain.

It belongs to the TRAFAC class TrmE-Era-EngA-EngB-Septin-like GTPase superfamily. EngA (Der) GTPase family. In terms of assembly, associates with the 50S ribosomal subunit.

Its function is as follows. GTPase that plays an essential role in the late steps of ribosome biogenesis. The polypeptide is GTPase Der (Rickettsia peacockii (strain Rustic)).